A 128-amino-acid polypeptide reads, in one-letter code: Small ribosomal subunit protein bS6 (128 aa).

Belongs to the bacterial ribosomal protein bS6 family.

In terms of biological role, binds together with bS18 to 16S ribosomal RNA. This is Small ribosomal subunit protein bS6 from Thermotoga sp. (strain RQ2).